The chain runs to 196 residues: GTP cyclohydrolase 1 (196 aa).

Cys-86, His-89, and Cys-157 together coordinate Zn(2+).

The protein belongs to the GTP cyclohydrolase I family. Toroid-shaped homodecamer, composed of two pentamers of five dimers.

The catalysed reaction is GTP + H2O = 7,8-dihydroneopterin 3'-triphosphate + formate + H(+). It participates in cofactor biosynthesis; 7,8-dihydroneopterin triphosphate biosynthesis; 7,8-dihydroneopterin triphosphate from GTP: step 1/1. This Parabacteroides distasonis (strain ATCC 8503 / DSM 20701 / CIP 104284 / JCM 5825 / NCTC 11152) protein is GTP cyclohydrolase 1.